The primary structure comprises 696 residues: Methionine synthase reductase (696 aa).

Positions 4–147 (FLLLYATQRG…VVEPWIDGLW (144 aa)) constitute a Flavodoxin-like domain. Residues 10-14 (TQRGQ) and 93-124 (LLGL…QRFY) each bind FMN. The hinge stretch occupies residues 166 to 245 (TLSRASDAPL…SSLSIPAVPP (80 aa)). Ser-171 and Ser-188 each carry phosphoserine. An FAD-binding FR-type domain is found at 269 to 531 (DPSFQVPISK…PRATNAFHLP (263 aa)). Lys-289 provides a ligand contact to NADP(+). Residues 449-452 (RPYS) and 485-488 (GVCT) contribute to the FAD site. NADP(+) contacts are provided by residues 608-609 (SR), 622-624 (YVQ), and Asp-657. An FAD-binding site is contributed by Trp-695.

Forms a multiprotein complex with MMACHC, MMADHC and MTR. Requires FAD as cofactor. FMN serves as cofactor.

Its subcellular location is the cytoplasm. The enzyme catalyses 2 methylcob(III)alamin-[methionine synthase] + 2 S-adenosyl-L-homocysteine + NADP(+) + H(+) = 2 cob(II)alamin-[methionine synthase] + 2 S-adenosyl-L-methionine + NADPH. It catalyses the reaction 2 cob(II)alamin + A + 2 H2O + 2 H(+) = 2 aquacob(III)alamin + AH2. Key enzyme in methionine and folate homeostasis responsible for the reactivation of methionine synthase (MTR/MS) activity by catalyzing the reductive methylation of MTR-bound cob(II)alamin. Cobalamin (vitamin B12) forms a complex with MTR to serve as an intermediary in methyl transfer reactions that cycles between MTR-bound methylcob(III)alamin and MTR bound-cob(I)alamin forms, and occasional oxidative escape of the cob(I)alamin intermediate during the catalytic cycle leads to the inactive cob(II)alamin species. The processing of cobalamin in the cytosol occurs in a multiprotein complex composed of at least MMACHC, MMADHC, MTRR and MTR which may contribute to shuttle safely and efficiently cobalamin towards MTR in order to produce methionine. Also necessary for the utilization of methyl groups from the folate cycle, thereby affecting transgenerational epigenetic inheritance. Also acts as a molecular chaperone for methionine synthase by stabilizing apoMTR and incorporating methylcob(III)alamin into apoMTR to form the holoenzyme. Also serves as an aquacob(III)alamin reductase by reducing aquacob(III)alamin to cob(II)alamin; this reduction leads to stimulation of the conversion of apoMTR and aquacob(III)alamin to MTR holoenzyme. This is Methionine synthase reductase from Mus musculus (Mouse).